Reading from the N-terminus, the 1150-residue chain is uncharacterized protein (1150 aa).

Belongs to the TMEM1 family.

This is an uncharacterized protein from Schizosaccharomyces pombe (strain 972 / ATCC 24843) (Fission yeast).